The sequence spans 156 residues: ATP synthase subunit b (156 aa).

The helical transmembrane segment at phenylalanine 7–proline 27 threads the bilayer.

The protein belongs to the ATPase B chain family. F-type ATPases have 2 components, F(1) - the catalytic core - and F(0) - the membrane proton channel. F(1) has five subunits: alpha(3), beta(3), gamma(1), delta(1), epsilon(1). F(0) has three main subunits: a(1), b(2) and c(10-14). The alpha and beta chains form an alternating ring which encloses part of the gamma chain. F(1) is attached to F(0) by a central stalk formed by the gamma and epsilon chains, while a peripheral stalk is formed by the delta and b chains.

Its subcellular location is the cell inner membrane. Its function is as follows. F(1)F(0) ATP synthase produces ATP from ADP in the presence of a proton or sodium gradient. F-type ATPases consist of two structural domains, F(1) containing the extramembraneous catalytic core and F(0) containing the membrane proton channel, linked together by a central stalk and a peripheral stalk. During catalysis, ATP synthesis in the catalytic domain of F(1) is coupled via a rotary mechanism of the central stalk subunits to proton translocation. Component of the F(0) channel, it forms part of the peripheral stalk, linking F(1) to F(0). This Cupriavidus taiwanensis (strain DSM 17343 / BCRC 17206 / CCUG 44338 / CIP 107171 / LMG 19424 / R1) (Ralstonia taiwanensis (strain LMG 19424)) protein is ATP synthase subunit b.